The primary structure comprises 298 residues: Enoyl-CoA hydratase ACTT6 (298 aa).

This sequence belongs to the enoyl-CoA hydratase/isomerase family.

Its pathway is mycotoxin biosynthesis. In terms of biological role, enoyl-CoA hydratase; part of the gene clusters that mediate the biosynthesis of the host-selective toxins (HSTs) ACT-toxins responsible for brown spot of tangerine disease by the tangerine pathotype which affects tangerines and mandarins. ACT-toxins consist of three moieties, 9,10-epoxy-8-hydroxy-9-methyl-decatrienoic acid (EDA), valine and a polyketide. ACT-toxin I is toxic to both citrus and pear; toxin II the 5''-deoxy derivative of ACT-toxin I, is highly toxic to pear and slightly toxic to citrus. On cellular level, ACT-toxins affect plasma membrane of susceptible cells and cause a sudden increase in loss of K(+) after a few minutes of toxin treatment. The acyl-CoA ligase ACTT1, the hydrolase ACTT2, the enoyl-CoA hydratases ACTT3 and ACTT6, and the acyl-CoA synthetase ACTT5 are all involved in the biosynthesis of the AK-, AF- and ACT-toxin common 9,10-epoxy-8-hydroxy-9-methyl-decatrienoic acid (EDA) structural moiety. The exact role of each enzyme, and of additional enzymes identified within the AF-toxin clusters have still to be determined. On the other hand, ACTTS1 to ACTTS4 are specific to the tangerine pathotype. The function of ACTTS3 is to elongate the polyketide chain portion of ACT-toxin that is unique to this toxin. The enoyl-reductase ACTTS2 might complement the missing enoyl-reductase (ER) domain in ACTTS3 in the synthesis of the polyketide portion of ACT-toxin. The roles of the nonribosomal peptide synthetases-related proteins ACTTS1 and ACTTS4 have also still not been elucidated. The chain is Enoyl-CoA hydratase ACTT6 from Alternaria alternata (Alternaria rot fungus).